A 61-amino-acid polypeptide reads, in one-letter code: Small ribosomal subunit protein uS14 (61 aa).

Zn(2+) contacts are provided by Cys-24, Cys-27, Cys-40, and Cys-43.

Belongs to the universal ribosomal protein uS14 family. Zinc-binding uS14 subfamily. Part of the 30S ribosomal subunit. Contacts proteins S3 and S10. It depends on Zn(2+) as a cofactor.

In terms of biological role, binds 16S rRNA, required for the assembly of 30S particles and may also be responsible for determining the conformation of the 16S rRNA at the A site. This chain is Small ribosomal subunit protein uS14, found in Helicobacter pylori (strain J99 / ATCC 700824) (Campylobacter pylori J99).